A 162-amino-acid polypeptide reads, in one-letter code: Shikimate kinase (162 aa).

11 to 16 serves as a coordination point for ATP; that stretch reads GSGKSS. Position 15 (serine 15) interacts with Mg(2+). The substrate site is built by aspartate 33, arginine 57, and glycine 80. Arginine 116 contributes to the ATP binding site. Arginine 132 is a binding site for substrate.

It belongs to the shikimate kinase family. As to quaternary structure, monomer. Mg(2+) is required as a cofactor.

It localises to the cytoplasm. The catalysed reaction is shikimate + ATP = 3-phosphoshikimate + ADP + H(+). Its pathway is metabolic intermediate biosynthesis; chorismate biosynthesis; chorismate from D-erythrose 4-phosphate and phosphoenolpyruvate: step 5/7. Catalyzes the specific phosphorylation of the 3-hydroxyl group of shikimic acid using ATP as a cosubstrate. The protein is Shikimate kinase of Helicobacter pylori (strain Shi470).